The sequence spans 657 residues: Glycogen debranching enzyme (657 aa).

D336 functions as the Nucleophile in the catalytic mechanism. Catalysis depends on E371, which acts as the Proton donor. The tract at residues 460–479 (ANGEENRDGTNNNYSNNHGK) is disordered.

The protein belongs to the glycosyl hydrolase 13 family.

The enzyme catalyses Hydrolysis of (1-&gt;6)-alpha-D-glucosidic linkages to branches with degrees of polymerization of three or four glucose residues in limit dextrin.. The protein operates within glycan degradation; glycogen degradation. Its function is as follows. Removes maltotriose and maltotetraose chains that are attached by 1,6-alpha-linkage to the limit dextrin main chain, generating a debranched limit dextrin. In Escherichia coli (strain SMS-3-5 / SECEC), this protein is Glycogen debranching enzyme.